The chain runs to 690 residues: Proprotein convertase subtilisin/kexin type 9 (690 aa).

The signal sequence occupies residues 1-28 (MGTVRSRRLWWPLPLLLLLLRGPAGARA). The propeptide occupies 29 to 150 (QEDDDGDYEE…IEEDSYVFAQ (122 aa)). Y36 is modified (sulfotyrosine). S45 is modified (phosphoserine). Residues 75–147 (TYVVVLKEET…VDYIEEDSYV (73 aa)) form the Inhibitor I9 domain. The Peptidase S8 domain maps to 153–459 (PWNLERITPA…GWQLFCRTVW (307 aa)). Catalysis depends on charge relay system residues D184 and H224. Cystine bridges form between C221/C253 and C321/C356. Catalysis depends on S384, which acts as the Charge relay system. Positions 448 to 690 (GAGWQLFCRT…HLAQASQELQ (243 aa)) are C-terminal domain. 3 disulfides stabilise this stretch: C455/C525, C475/C524, and C484/C507. The N-linked (GlcNAc...) asparagine glycan is linked to N531. 6 disulfides stabilise this stretch: C532-C599, C550-C598, C560-C586, C606-C677, C624-C676, and C633-C652. At S686 the chain carries Phosphoserine.

This sequence belongs to the peptidase S8 family. As to quaternary structure, monomer. Can self-associate to form dimers and higher multimers which may have increased LDLR degrading activity. The precursor protein but not the mature protein may form multimers. Interacts with APOB, VLDLR, LRP8/APOER2 and BACE1. The full-length immature form (pro-PCSK9) interacts with SCNN1A, SCNN1B and SCNN1G. The pro-PCSK9 form (via C-terminal domain) interacts with LDLR. Interacts (via the C-terminal domain) with ANXA2 (via repeat Annexin 1); the interaction inhibits the degradation of LDLR. Ca(2+) serves as cofactor. In terms of processing, cleavage by furin and PCSK5 generates a truncated inactive protein that is unable to induce LDLR degradation. Post-translationally, undergoes autocatalytic cleavage in the endoplasmic reticulum to release the propeptide from the N-terminus and the cleavage of the propeptide is strictly required for its maturation and activation. The cleaved propeptide however remains associated with the catalytic domain through non-covalent interactions, preventing potential substrates from accessing its active site. As a result, it is secreted from cells as a propeptide-containing, enzymatically inactive protein. Phosphorylation protects the propeptide against proteolysis.

It is found in the cytoplasm. The protein localises to the secreted. The protein resides in the endosome. Its subcellular location is the lysosome. It localises to the cell surface. It is found in the endoplasmic reticulum. The protein localises to the golgi apparatus. With respect to regulation, its proteolytic activity is autoinhibited by the non-covalent binding of the propeptide to the catalytic domain. Inhibited by EGTA. In terms of biological role, crucial player in the regulation of plasma cholesterol homeostasis. Binds to low-density lipid receptor family members: low density lipoprotein receptor (LDLR), very low density lipoprotein receptor (VLDLR), apolipoprotein E receptor (LRP1/APOER) and apolipoprotein receptor 2 (LRP8/APOER2), and promotes their degradation in intracellular acidic compartments. Acts via a non-proteolytic mechanism to enhance the degradation of the hepatic LDLR through a clathrin LDLRAP1/ARH-mediated pathway. May prevent the recycling of LDLR from endosomes to the cell surface or direct it to lysosomes for degradation. Can induce ubiquitination of LDLR leading to its subsequent degradation. Inhibits intracellular degradation of APOB via the autophagosome/lysosome pathway in a LDLR-independent manner. Involved in the disposal of non-acetylated intermediates of BACE1 in the early secretory pathway. Inhibits epithelial Na(+) channel (ENaC)-mediated Na(+) absorption by reducing ENaC surface expression primarily by increasing its proteasomal degradation. Regulates neuronal apoptosis via modulation of LRP8/APOER2 levels and related anti-apoptotic signaling pathways. This chain is Proprotein convertase subtilisin/kexin type 9 (PCSK9), found in Ateles geoffroyi (Black-handed spider monkey).